The sequence spans 300 residues: tRNA pseudouridine synthase B (300 aa).

The active-site Nucleophile is the D38.

It belongs to the pseudouridine synthase TruB family. Type 1 subfamily.

It carries out the reaction uridine(55) in tRNA = pseudouridine(55) in tRNA. Functionally, responsible for synthesis of pseudouridine from uracil-55 in the psi GC loop of transfer RNAs. This is tRNA pseudouridine synthase B from Dehalococcoides mccartyi (strain CBDB1).